A 207-amino-acid chain; its full sequence is Tereporin-Ts1 (207 aa).

An N-terminal signal peptide occupies residues 1 to 11 (VIFALVLGNAS). The tract at residues 35-54 (SAGTSLASTILSGLAASGYR) is N-terminal region. Phosphocholine-binding residues include Gly-111, Ser-129, Pro-131, Tyr-164, and Tyr-165.

The protein belongs to the actinoporin family. Conoidea subfamily. In terms of assembly, octamer or nonamer in membranes. Monomer in the soluble state. As to expression, expressed by the venom duct.

Its subcellular location is the secreted. The protein localises to the nematocyst. It localises to the target cell membrane. Functionally, pore-forming protein that forms pores of around 1 nm and causes cardiac stimulation and cytolysis. In Terebra subulata (Chocolate spotted auger), this protein is Tereporin-Ts1.